A 252-amino-acid chain; its full sequence is 3-dehydroquinate dehydratase (252 aa).

3-dehydroquinate is bound by residues Ser-21, 46 to 48 (EWR), and Arg-82. His-143 functions as the Proton donor/acceptor in the catalytic mechanism. The Schiff-base intermediate with substrate role is filled by Lys-170. 3-dehydroquinate is bound by residues Arg-213, Ser-232, and Gln-236.

This sequence belongs to the type-I 3-dehydroquinase family. Homodimer.

It carries out the reaction 3-dehydroquinate = 3-dehydroshikimate + H2O. It functions in the pathway metabolic intermediate biosynthesis; chorismate biosynthesis; chorismate from D-erythrose 4-phosphate and phosphoenolpyruvate: step 3/7. Its function is as follows. Involved in the third step of the chorismate pathway, which leads to the biosynthesis of aromatic amino acids. Catalyzes the cis-dehydration of 3-dehydroquinate (DHQ) and introduces the first double bond of the aromatic ring to yield 3-dehydroshikimate. The protein is 3-dehydroquinate dehydratase of Salmonella dublin (strain CT_02021853).